The primary structure comprises 211 residues: Arginine exporter protein ArgO (211 aa).

6 helical membrane passes run 1–21 (MFTY…PLGP), 37–57 (LMIA…GIFG), 68–88 (LLAL…FGAL), 111–131 (IIIT…DTFV), 147–167 (WFAL…ALLA), and 179–199 (AQRI…FQLA).

It belongs to the LysE/ArgO transporter (TC 2.A.75) family.

It localises to the cell inner membrane. It carries out the reaction L-arginine(in) = L-arginine(out). Its function is as follows. Involved in the export of arginine. Important to control the intracellular level of arginine and the correct balance between arginine and lysine. The sequence is that of Arginine exporter protein ArgO from Klebsiella pneumoniae subsp. pneumoniae (strain ATCC 700721 / MGH 78578).